Reading from the N-terminus, the 1173-residue chain is MKGIFLLLMLVMPQTHQAAESGNDDNSVFDLFELTGYNRKAGSRKPQGLHLVKGPDPSSPAYRIEDADLIPPLPEDKFQDLLDAIRADRGFILLATLRQAKKSRGALLSVERKDGGGHIFSLISNGRARTLDLSLSGERKQQVVSVEDAVLATGNWTNITLFVQEDRAQLYVGCNKMENAELDVPIQKIFTENLASTAHLRVAKGGVKDNFQGVLQNVRFVFGTTLEAILRNKGCLSMTNSVITLDNPVNGSSPAIRTNYIGHKTKDLQAVCGFSCDDLSKLFAEMKGLRTLVTTLKDQVTKETEKNELIAQIVTRTPGVCLHNGVLHKNRDEWTVDSCTECTCQNSATICRKVSCPLMPCTNATIPDGECCPRCWPSDSADDDWSPWSDWTPCSVTCGHGIQQRGRSCDSLNNPCEGSSVQTRSCQIQDCDKRFKQDGGWSHWSPWSSCSVTCGSGQITRIRLCNSPVPQLNGKQCEGEGRENKPCQKDPCPINGQWGPWSLWDTCTVTCGGGMQKRERLCNNPKPQYEGKDCIGEPTDSQICNKQDCPIDGCLSNPCFAGVKCTSFIDGSWKCGSCPPGYRGNGITCKDIDECKEVPDACFTLNGVHRCENTEPGYNCLPCPPRFTGTQPFGKGIEEAKANKQVCKPRNPCADGTHDCHKNARCIYLGHYSDPMFRCECRPGYAGNGIICGEDTDLDGWPNENLTCVDNATYHCLKDNCPNLPNSGQEDYDKDGMGDACDKDDDNDGILDDRDNCQFVYNPAQYDYDRDDVGDRCDNCPYNHNPDQADTDRNGEGDACSVDIDGDGILNERDNCAYVYNVDQKDTDKDGVGDQCDNCPLEHNPEQTDSDSDLIGDKCDNNQDIDEDGHQNNLDNCPYIPNANQADHDKDGKGDACDHDDDNDGVPDDKDNCRLVPNPDQTDTNGDGRGDACQYDFDDDSIPDAEDVCPENVEISTTDFRKFQMVPLDPKGTSQIDPNWVVRHQGKELVQTVNCDPGIAVGFDEFSAVDFSGTFFINTERDDDYAGFVFGYQSSSRFYVVMWKQITQTYWDTTPTVAQGYSGLSIKVVNSTSGPGEHLRNALWHTGNTPGQVRTLWHDPHQKGWKDFTAYRWHLTHRPKTGFIRVVMYEGKRVMADSGPIYDKTYAGGRLGLFVFSQEMVFFSDLKYECRDS.

An N-terminal signal peptide occupies residues 1–18; it reads MKGIFLLLMLVMPQTHQA. The 203-residue stretch at 22 to 224 folds into the Laminin G-like domain; sequence GNDDNSVFDL…LQNVRFVFGT (203 aa). The heparin-binding stretch occupies residues 50-98; sequence HLVKGPDPSSPAYRIEDADLIPPLPEDKFQDLLDAIRADRGFILLATLR. N-linked (GlcNAc...) asparagine glycans are attached at residues Asn-155 and Asn-158. Cys-174 and Cys-235 are disulfide-bonded. Residues Asn-250 and Asn-363 are each glycosylated (N-linked (GlcNAc...) asparagine). The VWFC domain maps to 319–376; that stretch reads GVCLHNGVLHKNRDEWTVDSCTECTCQNSATICRKVSCPLMPCTNATIPDGECCPRCW. 3 TSP type-1 domains span residues 382 to 432, 438 to 493, and 495 to 550; these read DDDW…QDCD, DGGW…DPCP, and NGQW…QDCP. Cystine bridges form between Cys-394–Cys-426, Cys-398–Cys-431, Cys-409–Cys-416, Cys-450–Cys-487, Cys-454–Cys-492, Cys-465–Cys-477, Cys-507–Cys-544, Cys-511–Cys-549, Cys-522–Cys-534, Cys-554–Cys-565, Cys-559–Cys-575, Cys-578–Cys-589, Cys-595–Cys-611, Cys-602–Cys-620, Cys-623–Cys-647, Cys-653–Cys-666, Cys-660–Cys-679, and Cys-681–Cys-692. Residues 550-590 enclose the EGF-like 1 domain; it reads PIDGCLSNPCFAGVKCTSFIDGSWKCGSCPPGYRGNGITCK. Residues 649-693 enclose the EGF-like 2 domain; the sequence is PRNPCADGTHDCHKNARCIYLGHYSDPMFRCECRPGYAGNGIICG. TSP type-3 repeat units follow at residues 694-729, 730-765, 766-788, 789-824, 825-847, 848-885, 886-921, and 922-957; these read EDTD…NSGQ, EDYD…NPAQ, YDYD…NPDQ, ADTD…NVDQ, KDTD…NPEQ, TDSD…NANQ, ADHD…NPDQ, and TDTN…EIST. N-linked (GlcNAc...) asparagine glycosylation is found at Asn-705 and Asn-711. Intrachain disulfides connect Cys-708–Cys-716, Cys-721–Cys-741, Cys-757–Cys-777, Cys-780–Cys-800, Cys-816–Cys-836, Cys-839–Cys-859, Cys-877–Cys-897, Cys-913–Cys-933, and Cys-949–Cys-1170. Positions 838–935 are disordered; that stretch reads NCPLEHNPEQ…GDGRGDACQY (98 aa). Positions 886-897 are enriched in basic and acidic residues; it reads ADHDKDGKGDAC. The Cell attachment site motif lies at 929-931; it reads RGD. One can recognise a TSP C-terminal domain in the interval 961–1173; it reads RKFQMVPLDP…SDLKYECRDS (213 aa). Residue Asn-1070 is glycosylated (N-linked (GlcNAc...) asparagine).

The protein belongs to the thrombospondin family. Homotrimer; disulfide-linked.

The protein resides in the secreted. It localises to the cell surface. The protein localises to the extracellular space. Its subcellular location is the extracellular matrix. It is found in the endoplasmic reticulum. The protein resides in the sarcoplasmic reticulum. Functionally, adhesive glycoprotein that mediates cell-to-cell and cell-to-matrix interactions. Can bind to fibrinogen, fibronectin, laminin, type V collagen and integrins alpha-V/beta-1, alpha-V/beta-3 and alpha-IIb/beta-3. May play a role in ER stress response. This is Thrombospondin-1 (thbs1) from Xenopus laevis (African clawed frog).